Reading from the N-terminus, the 249-residue chain is 1-(5-phosphoribosyl)-5-[(5-phosphoribosylamino)methylideneamino] imidazole-4-carboxamide isomerase (249 aa).

Asp-8 functions as the Proton acceptor in the catalytic mechanism. The active-site Proton donor is the Asp-130.

Belongs to the HisA/HisF family.

It is found in the cytoplasm. The catalysed reaction is 1-(5-phospho-beta-D-ribosyl)-5-[(5-phospho-beta-D-ribosylamino)methylideneamino]imidazole-4-carboxamide = 5-[(5-phospho-1-deoxy-D-ribulos-1-ylimino)methylamino]-1-(5-phospho-beta-D-ribosyl)imidazole-4-carboxamide. It functions in the pathway amino-acid biosynthesis; L-histidine biosynthesis; L-histidine from 5-phospho-alpha-D-ribose 1-diphosphate: step 4/9. In Chromohalobacter salexigens (strain ATCC BAA-138 / DSM 3043 / CIP 106854 / NCIMB 13768 / 1H11), this protein is 1-(5-phosphoribosyl)-5-[(5-phosphoribosylamino)methylideneamino] imidazole-4-carboxamide isomerase.